A 125-amino-acid polypeptide reads, in one-letter code: Plastocyanin (125 aa).

The signal sequence occupies residues 1-34; sequence MKVLASFARRLSLFAVAAVLCVGSFFLSAAPASA. Residues 35 to 125 enclose the Plastocyanin-like domain; the sequence is QTVAIKMGAD…AGMVGKIVVQ (91 aa). The Cu cation site is built by histidine 73, cysteine 110, histidine 113, and methionine 118.

It belongs to the plastocyanin family. The cofactor is Cu(2+).

It localises to the cellular thylakoid membrane. Its function is as follows. Participates in electron transfer between P700 and the cytochrome b6-f complex in photosystem I. The polypeptide is Plastocyanin (petE) (Synechococcus elongatus (strain ATCC 33912 / PCC 7942 / FACHB-805) (Anacystis nidulans R2)).